A 136-amino-acid polypeptide reads, in one-letter code: Polyadenylate-binding protein-interacting protein 2B (136 aa).

The span at 15-25 (NGSSVASTSPS) shows a compositional bias: polar residues. Disordered regions lie at residues 15–40 (NGSSVASTSPSVKCKEDQGLNGHEEK) and 107–136 (SVGDSHESEDILSKSNLNPDAKEFVPGVKY). Basic and acidic residues predominate over residues 27-40 (KCKEDQGLNGHEEK).

It belongs to the PAIP2 family. In terms of assembly, interacts (via central acidic portion and C-terminus) with PABPC1 (via the second and third RRM domains and the C-terminus). In terms of processing, ubiquitinated in vitro. In terms of tissue distribution, expressed at very high levels in pancreas, at high levels in testis and at moderately high levels in brain, heart and lung (at protein level).

Inhibits translation of capped and polyadenylated mRNAs by displacing PABPC1 from the poly(A) tail. The protein is Polyadenylate-binding protein-interacting protein 2B (Paip2b) of Mus musculus (Mouse).